Here is a 242-residue protein sequence, read N- to C-terminus: Type III pantothenate kinase (242 aa).

Position 7-14 (7-14 (DLGNSRFK)) interacts with ATP. Residues Tyr91 and 98 to 101 (GVDR) contribute to the substrate site. The Proton acceptor role is filled by Asp100. Thr121 contacts ATP. Thr171 contacts substrate.

It belongs to the type III pantothenate kinase family. As to quaternary structure, homodimer. Requires NH4(+) as cofactor. It depends on K(+) as a cofactor.

The protein localises to the cytoplasm. The catalysed reaction is (R)-pantothenate + ATP = (R)-4'-phosphopantothenate + ADP + H(+). Its pathway is cofactor biosynthesis; coenzyme A biosynthesis; CoA from (R)-pantothenate: step 1/5. Functionally, catalyzes the phosphorylation of pantothenate (Pan), the first step in CoA biosynthesis. This chain is Type III pantothenate kinase, found in Xylella fastidiosa (strain M23).